A 346-amino-acid polypeptide reads, in one-letter code: Short-chain dehydrogenase/reductase bet4 (346 aa).

Residues 1–35 are disordered; that stretch reads MTPAKAPSHAKKPEAGSQPISSMWTQMFPPKPTYT. NADP(+)-binding residues include Val56, Lys80, Asp105, and Asn132. Catalysis depends on Ser191, which acts as the Proton donor. Residues Tyr222 and Lys226 each contribute to the NADP(+) site. Tyr222 serves as the catalytic Proton acceptor. Lys226 acts as the Lowers pKa of active site Tyr in catalysis.

It belongs to the short-chain dehydrogenases/reductases (SDR) family.

It carries out the reaction dehydroprobetaenone I + AH2 = probetaenone I + A. The protein operates within mycotoxin biosynthesis. Its function is as follows. Short-chain dehydrogenase/reductase; part of the gene cluster that mediates the biosynthesis of betaenones, phytotoxic polyketides involved in leaf spot disease in sugar beets. The first step of the pathway is the synthesis of dehydroprobetaenone I by the polyketide synthase bet1 and the enoyl reductase bet3 via condensation of one acetyl-CoA starter unit with 7 malonyl-CoA units and 5 methylations. The C-terminal reductase (R) domain of bet1 catalyzes the reductive release of the polyketide chain. Because bet1 lacks a designated enoylreductase (ER) domain, the required activity is provided the enoyl reductase bet3. The short-chain dehydrogenase/reductase bet4 then catalyzes reduction of dehydroprobetaenone I to probetaenone I. The cytochrome P450 monooxygenase bet2 catalyzes successive epoxidation, oxidation (resulting from epoxide opening) and hydroxylation to install a tertiary alcohol in the decaline ring to yield betaenone C from dehydroprobetaenone I and betaenone B from probetaenone I. The FAD-linked oxidoreductase (orf1) is probably responsible for the conversion of betaenone C to betaenone A via an intramolecular aldol reaction between C-1 and C-17 to form the bridged tricyclic system in betaenone A. The polypeptide is Short-chain dehydrogenase/reductase bet4 (Neocamarosporium betae (Beet black rot fungus)).